A 404-amino-acid polypeptide reads, in one-letter code: MAMVTGGWGGPGGDTNGVDKAGGYPRAAEDDSASPPGAASDAEPGDEERPGLQVDCVVCGDKSSGKHYGVFTCEGCKSFFKRSIRRNLSYTCRSNRDCQIDQHHRNQCQYCRLKKCFRVGMRKEAVQRGRIPHSLPGAVAASSGSPPGSALAAVASGGDLFPGQPVSELIAQLLRAEPYPAAAGRFGAGGGAAGAVLGIDNVCELAARLLFSTVEWARHAPFFPELPVADQVALLRLSWSELFVLNAAQAALPLHTAPLLAAAGLHAAPMAAERAVAFMDQVRAFQEQVDKLGRLQVDSAEYGCLKAIALFTPDACGLSDPAHVESLQEKAQVALTEYVRAQYPSQPQRFGRLLLRLPALRAVPASLISQLFFMRLVGKTPIETLIRDMLLSGSTFNWPYGSGQ.

Residues 1 to 15 (MAMVTGGWGGPGGDT) show a composition bias toward gly residues. Residues 1–49 (MAMVTGGWGGPGGDTNGVDKAGGYPRAAEDDSASPPGAASDAEPGDEER) form a disordered region. Residues 33–42 (ASPPGAASDA) show a composition bias toward low complexity. Ser-34 and Ser-40 each carry phosphoserine. A DNA-binding region (nuclear receptor) is located at residues 53–128 (QVDCVVCGDK…VGMRKEAVQR (76 aa)). The segment at 56–76 (CVVCGDKSSGKHYGVFTCEGC) adopts an NR C4-type zinc-finger fold. The residue at position 83 (Ser-83) is a Phosphoserine. An NR C4-type zinc finger spans residues 92 to 116 (CRSNRDCQIDQHHRNQCQYCRLKKC). In terms of domain architecture, NR LBD spans 165–393 (PVSELIAQLL…TLIRDMLLSG (229 aa)). Positions 327 to 404 (LQEKAQVALT…TFNWPYGSGQ (78 aa)) are important for dimerization.

Belongs to the nuclear hormone receptor family. NR2 subfamily. In terms of assembly, binds DNA as dimer; homodimer and heterodimer with NR2F2 and probably NR2F1. Interacts with THRB. As to expression, expressed in heart, placenta, liver, skeletal muscle, kidney and pancreas.

It localises to the nucleus. Its function is as follows. Transcription factor predominantly involved in transcriptional repression. Binds to promoter/enhancer response elements that contain the imperfect 5'-AGGTCA-3' direct or inverted repeats with various spacings which are also recognized by other nuclear hormone receptors. Involved in modulation of hormonal responses. Represses transcriptional activity of the lutropin-choriogonadotropic hormone receptor/LHCGR gene, the renin/REN gene and the oxytocin-neurophysin/OXT gene. Represses the triiodothyronine-dependent and -independent transcriptional activity of the thyroid hormone receptor gene in a cell type-specific manner. The corepressing function towards thyroid hormone receptor beta/THRB involves at least in part the inhibition of THRB binding to triiodothyronine response elements (TREs) by NR2F6. Inhibits NFATC transcription factor DNA binding and subsequently its transcriptional activity. Acts as transcriptional repressor of IL-17 expression in Th-17 differentiated CD4(+) T cells and may be involved in induction and/or maintenance of peripheral immunological tolerance and autoimmunity. Involved in development of forebrain circadian clock; is required early in the development of the locus coeruleus (LC). In Homo sapiens (Human), this protein is Nuclear receptor subfamily 2 group F member 6 (NR2F6).